A 285-amino-acid chain; its full sequence is tRNA pseudouridine synthase B (285 aa).

Asp40 functions as the Nucleophile in the catalytic mechanism.

The protein belongs to the pseudouridine synthase TruB family. Type 1 subfamily.

It catalyses the reaction uridine(55) in tRNA = pseudouridine(55) in tRNA. In terms of biological role, responsible for synthesis of pseudouridine from uracil-55 in the psi GC loop of transfer RNAs. The protein is tRNA pseudouridine synthase B of Caldanaerobacter subterraneus subsp. tengcongensis (strain DSM 15242 / JCM 11007 / NBRC 100824 / MB4) (Thermoanaerobacter tengcongensis).